Here is a 264-residue protein sequence, read N- to C-terminus: Thymidylate synthase (264 aa).

A dUMP-binding site is contributed by arginine 21. Histidine 51 contributes to the (6R)-5,10-methylene-5,6,7,8-tetrahydrofolate binding site. 126–127 (RR) provides a ligand contact to dUMP. The active-site Nucleophile is cysteine 146. Residues 166 to 169 (RSAD), asparagine 177, and 207 to 209 (HIY) contribute to the dUMP site. Residue aspartate 169 participates in (6R)-5,10-methylene-5,6,7,8-tetrahydrofolate binding. A (6R)-5,10-methylene-5,6,7,8-tetrahydrofolate-binding site is contributed by alanine 263.

This sequence belongs to the thymidylate synthase family. Bacterial-type ThyA subfamily. In terms of assembly, homodimer.

Its subcellular location is the cytoplasm. The enzyme catalyses dUMP + (6R)-5,10-methylene-5,6,7,8-tetrahydrofolate = 7,8-dihydrofolate + dTMP. Its pathway is pyrimidine metabolism; dTTP biosynthesis. Catalyzes the reductive methylation of 2'-deoxyuridine-5'-monophosphate (dUMP) to 2'-deoxythymidine-5'-monophosphate (dTMP) while utilizing 5,10-methylenetetrahydrofolate (mTHF) as the methyl donor and reductant in the reaction, yielding dihydrofolate (DHF) as a by-product. This enzymatic reaction provides an intracellular de novo source of dTMP, an essential precursor for DNA biosynthesis. The sequence is that of Thymidylate synthase from Ruminiclostridium cellulolyticum (strain ATCC 35319 / DSM 5812 / JCM 6584 / H10) (Clostridium cellulolyticum).